The following is a 325-amino-acid chain: Porphobilinogen deaminase (325 aa).

C253 carries the post-translational modification S-(dipyrrolylmethanemethyl)cysteine.

The protein belongs to the HMBS family. It depends on dipyrromethane as a cofactor.

The catalysed reaction is 4 porphobilinogen + H2O = hydroxymethylbilane + 4 NH4(+). It functions in the pathway porphyrin-containing compound metabolism; protoporphyrin-IX biosynthesis; coproporphyrinogen-III from 5-aminolevulinate: step 2/4. Functionally, tetrapolymerization of the monopyrrole PBG into the hydroxymethylbilane pre-uroporphyrinogen in several discrete steps. This Dictyostelium discoideum (Social amoeba) protein is Porphobilinogen deaminase (hemC).